The sequence spans 38 residues: Mu-hexatoxin-Mg1b (38 aa).

Disulfide bonds link C1–C15, C8–C20, and C14–C34. A Serine amide modification is found at S38.

The protein belongs to the neurotoxin 14 (magi-1) family. 09 (magi-1) subfamily. As to expression, expressed by the venom gland.

It localises to the secreted. In terms of biological role, insecticidal neurotoxin. Shows competition for site 3 of insect voltage-gated sodium channels (Nav). This chain is Mu-hexatoxin-Mg1b, found in Macrothele gigas (Japanese funnel web spider).